The chain runs to 307 residues: Ribosomal RNA small subunit methyltransferase A (307 aa).

S-adenosyl-L-methionine-binding residues include asparagine 35, valine 37, glycine 62, glutamate 83, aspartate 113, and asparagine 136.

The protein belongs to the class I-like SAM-binding methyltransferase superfamily. rRNA adenine N(6)-methyltransferase family. RsmA subfamily.

The protein resides in the cytoplasm. It carries out the reaction adenosine(1518)/adenosine(1519) in 16S rRNA + 4 S-adenosyl-L-methionine = N(6)-dimethyladenosine(1518)/N(6)-dimethyladenosine(1519) in 16S rRNA + 4 S-adenosyl-L-homocysteine + 4 H(+). In terms of biological role, specifically dimethylates two adjacent adenosines (A1518 and A1519) in the loop of a conserved hairpin near the 3'-end of 16S rRNA in the 30S particle. May play a critical role in biogenesis of 30S subunits. The sequence is that of Ribosomal RNA small subunit methyltransferase A from Bifidobacterium longum (strain DJO10A).